The following is an 862-amino-acid chain: Protein SEY1 (862 aa).

The Cytoplasmic portion of the chain corresponds to methionine 1–glutamine 743. One can recognise a GB1/RHD3-type G domain in the interval glycine 48–alanine 301. Residue glycine 58 to serine 65 participates in GTP binding. Positions serine 476–glutamate 500 form a coiled coil. The chain crosses the membrane as a helical span at residues valine 744–leucine 764. The Lumenal segment spans residues arginine 765 to proline 767. Residues isoleucine 768–leucine 788 traverse the membrane as a helical segment. At tryptophan 789 to leucine 862 the chain is on the cytoplasmic side. Residues serine 818 to leucine 862 are disordered.

It belongs to the TRAFAC class dynamin-like GTPase superfamily. GB1/RHD3 GTPase family. RHD3 subfamily.

The protein localises to the endoplasmic reticulum membrane. Cooperates with the reticulon proteins and tubule-shaping DP1 family proteins to generate and maintain the structure of the tubular endoplasmic reticulum network. Has GTPase activity, which is required for its function in ER organization. The protein is Protein SEY1 of Arthroderma otae (strain ATCC MYA-4605 / CBS 113480) (Microsporum canis).